A 302-amino-acid polypeptide reads, in one-letter code: Aspartate carbamoyltransferase catalytic subunit (302 aa).

Carbamoyl phosphate-binding residues include Arg-49 and Thr-50. Lys-77 provides a ligand contact to L-aspartate. 3 residues coordinate carbamoyl phosphate: Arg-99, His-126, and Gln-129. 2 residues coordinate L-aspartate: Arg-159 and Arg-209. Residues Ala-250 and Pro-251 each coordinate carbamoyl phosphate.

The protein belongs to the aspartate/ornithine carbamoyltransferase superfamily. ATCase family. Heterododecamer (2C3:3R2) of six catalytic PyrB chains organized as two trimers (C3), and six regulatory PyrI chains organized as three dimers (R2).

It carries out the reaction carbamoyl phosphate + L-aspartate = N-carbamoyl-L-aspartate + phosphate + H(+). It functions in the pathway pyrimidine metabolism; UMP biosynthesis via de novo pathway; (S)-dihydroorotate from bicarbonate: step 2/3. Its function is as follows. Catalyzes the condensation of carbamoyl phosphate and aspartate to form carbamoyl aspartate and inorganic phosphate, the committed step in the de novo pyrimidine nucleotide biosynthesis pathway. This Staphylococcus carnosus (strain TM300) protein is Aspartate carbamoyltransferase catalytic subunit.